A 337-amino-acid chain; its full sequence is uncharacterized protein (337 aa).

Topologically, residues 1-10 (MKLKINIRPN) are cytoplasmic. Residues 11–31 (EIIFLICIVVIFSFSYTLTYF) traverse the membrane as a helical segment. At 32–100 (DSPIFKEHYI…LEKLFSFSDN (69 aa)) the chain is on the extracellular side. The helical transmembrane segment at 101–121 (ILIVLIIVQVIVGFLIFLLSV) threads the bilayer. At 122 to 197 (EKLSKCNYQL…KILIIKKKRD (76 aa)) the chain is on the cytoplasmic side. Low complexity predominate over residues 148 to 167 (NNNNEDINNNNNNNNNNNNK). The disordered stretch occupies residues 148-179 (NNNNEDINNNNNNNNNNNNKNKNDERNNEEIE). A helical membrane pass occupies residues 198 to 218 (ILLAIIIFFLVLLGVLTIIYV). Topologically, residues 219-285 (SFIPLNIRKA…SWSLDSGLFN (67 aa)) are extracellular. Residues 286–306 (VKIVFFSTILIEFLTGCLILL) form a helical membrane-spanning segment. Residues 307 to 337 (MKFKKDPNIVPLTKPSIASPTQIPHLFCIAK) lie on the Cytoplasmic side of the membrane.

It localises to the membrane. This is an uncharacterized protein from Dictyostelium discoideum (Social amoeba).